We begin with the raw amino-acid sequence, 184 residues long: uncharacterized protein (184 aa).

A helical transmembrane segment spans residues 5-27 (YLLATAMFLIVCVYVISETVNLH).

It is found in the membrane. This is an uncharacterized protein from Methanocaldococcus jannaschii (strain ATCC 43067 / DSM 2661 / JAL-1 / JCM 10045 / NBRC 100440) (Methanococcus jannaschii).